The chain runs to 550 residues: Chaperonin GroEL (550 aa).

Residues 30 to 33 (TLGP), Lys-51, 87 to 91 (DGTTT), Gly-415, 479 to 481 (NAA), and Asp-495 each bind ATP. Positions 525 to 550 (PKDEKSSSELNSAPGNGMGGGMGGMM) are disordered. Positions 540–550 (NGMGGGMGGMM) are enriched in gly residues.

It belongs to the chaperonin (HSP60) family. In terms of assembly, forms a cylinder of 14 subunits composed of two heptameric rings stacked back-to-back. Interacts with the co-chaperonin GroES.

The protein resides in the cytoplasm. The enzyme catalyses ATP + H2O + a folded polypeptide = ADP + phosphate + an unfolded polypeptide.. Together with its co-chaperonin GroES, plays an essential role in assisting protein folding. The GroEL-GroES system forms a nano-cage that allows encapsulation of the non-native substrate proteins and provides a physical environment optimized to promote and accelerate protein folding. The sequence is that of Chaperonin GroEL from Buchnera aphidicola subsp. Cinara cedri (strain Cc).